A 242-amino-acid chain; its full sequence is Cysteine-rich venom protein helothermine (242 aa).

A signal peptide spans 1–19 (MILLSLYLCLAAMLHQSEG). The 129-residue stretch at 41 to 169 (DKHNNLRRIV…TYKYYQVCQY (129 aa)) folds into the SCP domain. Disulfide bonds link C77/C155, C94/C170, C150/C167, C189/C196, C192/C201, C205/C237, C214/C231, and C223/C235. The 33-residue stretch at 205 to 237 (CKQNDVYNNCPDLKKQVGCGHPIMKDCMATCKC) folds into the ShKT domain.

It belongs to the CRISP family. Expressed by the venom gland.

The protein localises to the secreted. Functionally, alters a variety of ion channel activities, including voltage-gated potassium channels (Kv), voltage-gated calcium channels (L-, N-, and P-type) (Cav) and ryanodine receptors (RyR). Is toxic to mice (causes lethargy, partial paralysis of rear limbs and lowering of body temperature). This is Cysteine-rich venom protein helothermine from Heloderma horridum horridum (Mexican beaded lizard).